The sequence spans 89 residues: uncharacterized protein (89 aa).

Positions 1 to 27 (MKKAAAVLLSLGLVFGFSYGAGHVAEA) are cleaved as a signal peptide.

This is an uncharacterized protein from Bacillus subtilis (strain 168).